The following is a 428-amino-acid chain: Glutamate-1-semialdehyde 2,1-aminomutase (428 aa).

Lysine 265 carries the N6-(pyridoxal phosphate)lysine modification.

This sequence belongs to the class-III pyridoxal-phosphate-dependent aminotransferase family. HemL subfamily. In terms of assembly, homodimer. It depends on pyridoxal 5'-phosphate as a cofactor.

Its subcellular location is the cytoplasm. It carries out the reaction (S)-4-amino-5-oxopentanoate = 5-aminolevulinate. Its pathway is porphyrin-containing compound metabolism; protoporphyrin-IX biosynthesis; 5-aminolevulinate from L-glutamyl-tRNA(Glu): step 2/2. The protein is Glutamate-1-semialdehyde 2,1-aminomutase of Hamiltonella defensa subsp. Acyrthosiphon pisum (strain 5AT).